Reading from the N-terminus, the 242-residue chain is Zinc import ATP-binding protein ZnuC (242 aa).

One can recognise an ABC transporter domain in the interval 24–241 (INVKDLSFAY…EKFLKMFSSY (218 aa)). Residue 56 to 63 (GPNGGGKT) participates in ATP binding.

The protein belongs to the ABC transporter superfamily. Zinc importer (TC 3.A.1.15.5) family. In terms of assembly, the complex is composed of two ATP-binding proteins (ZnuC), two transmembrane proteins (ZnuB) and a solute-binding protein (ZnuA).

It localises to the cell inner membrane. The catalysed reaction is Zn(2+)(out) + ATP(in) + H2O(in) = Zn(2+)(in) + ADP(in) + phosphate(in) + H(+)(in). Functionally, part of the ABC transporter complex ZnuABC involved in zinc import. Responsible for energy coupling to the transport system. This chain is Zinc import ATP-binding protein ZnuC, found in Ehrlichia ruminantium (strain Gardel).